The chain runs to 335 residues: Glyceraldehyde-3-phosphate dehydrogenase 2 (335 aa).

Residues 13–14 (RI), aspartate 35, and arginine 80 each bind NAD(+). Phosphoserine is present on residues serine 125 and serine 151. 151–153 (SCT) provides a ligand contact to D-glyceraldehyde 3-phosphate. The active-site Nucleophile is cysteine 152. Phosphothreonine is present on residues threonine 153, threonine 154, threonine 182, and threonine 184. A D-glyceraldehyde 3-phosphate-binding site is contributed by threonine 182. Residues serine 192, serine 203, and serine 209 each carry the phosphoserine modification. Threonine 211 carries the post-translational modification Phosphothreonine. Residues 211 to 212 (TG) and arginine 234 contribute to the D-glyceraldehyde 3-phosphate site. Position 237 is a phosphothreonine (threonine 237). Residue serine 241 is modified to Phosphoserine. Residue asparagine 316 coordinates NAD(+).

This sequence belongs to the glyceraldehyde-3-phosphate dehydrogenase family. Homotetramer.

It is found in the cytoplasm. It carries out the reaction D-glyceraldehyde 3-phosphate + phosphate + NAD(+) = (2R)-3-phospho-glyceroyl phosphate + NADH + H(+). It participates in carbohydrate degradation; glycolysis; pyruvate from D-glyceraldehyde 3-phosphate: step 1/5. The protein is Glyceraldehyde-3-phosphate dehydrogenase 2 (gpd3) of Schizosaccharomyces pombe (strain 972 / ATCC 24843) (Fission yeast).